Here is a 362-residue protein sequence, read N- to C-terminus: [LysW]-lysine hydrolase (362 aa).

Residue His-69 coordinates Zn(2+). The active site involves Asp-71. Asp-94 contributes to the Zn(2+) binding site. The active-site Proton acceptor is Glu-127. Glu-128, Glu-151, and His-334 together coordinate Zn(2+).

Belongs to the peptidase M20A family. LysK subfamily. Zn(2+) is required as a cofactor. It depends on Co(2+) as a cofactor.

The protein resides in the cytoplasm. The catalysed reaction is [amino-group carrier protein]-C-terminal-gamma-(L-lysyl)-L-glutamate + H2O = [amino-group carrier protein]-C-terminal-L-glutamate + L-lysine. Its pathway is amino-acid biosynthesis; L-lysine biosynthesis via AAA pathway; L-lysine from L-alpha-aminoadipate (Thermus route): step 5/5. Its function is as follows. Catalyzes the release of L-lysine from [LysW]-gamma-L-lysine. The polypeptide is [LysW]-lysine hydrolase (Deinococcus radiodurans (strain ATCC 13939 / DSM 20539 / JCM 16871 / CCUG 27074 / LMG 4051 / NBRC 15346 / NCIMB 9279 / VKM B-1422 / R1)).